A 303-amino-acid chain; its full sequence is Recombination-associated protein RdgC (303 aa).

It belongs to the RdgC family.

Its subcellular location is the cytoplasm. It localises to the nucleoid. Functionally, may be involved in recombination. The sequence is that of Recombination-associated protein RdgC from Shewanella halifaxensis (strain HAW-EB4).